The primary structure comprises 429 residues: Enolase (429 aa).

Position 168 (Gln-168) interacts with (2R)-2-phosphoglycerate. Catalysis depends on Glu-210, which acts as the Proton donor. Asp-247, Glu-288, and Asp-315 together coordinate Mg(2+). Lys-340, Arg-369, Ser-370, and Lys-391 together coordinate (2R)-2-phosphoglycerate. Residue Lys-340 is the Proton acceptor of the active site.

This sequence belongs to the enolase family. The cofactor is Mg(2+).

The protein resides in the cytoplasm. The protein localises to the secreted. It is found in the cell surface. The catalysed reaction is (2R)-2-phosphoglycerate = phosphoenolpyruvate + H2O. It functions in the pathway carbohydrate degradation; glycolysis; pyruvate from D-glyceraldehyde 3-phosphate: step 4/5. Its function is as follows. Catalyzes the reversible conversion of 2-phosphoglycerate (2-PG) into phosphoenolpyruvate (PEP). It is essential for the degradation of carbohydrates via glycolysis. In Nostoc punctiforme (strain ATCC 29133 / PCC 73102), this protein is Enolase.